A 655-amino-acid chain; its full sequence is Hepatocyte growth factor activator serine protease (655 aa).

The first 35 residues, 1–35 (MGRWAWVPSPWPPPGLGPFLLLLLLLLLLPRGFQP), serve as a signal peptide directing secretion. Positions 36–372 (QPGGNRTESP…RLEACESLTR (337 aa)) are cleaved as a propeptide — removed in mature form. Asn-40 and Asn-48 each carry an N-linked (GlcNAc...) asparagine glycan. The segment at 64–102 (TSETPATSAPEAEGPQSGGLPPPPRAVPSSSSPQAQALT) is disordered. In terms of domain architecture, Fibronectin type-II spans 103-150 (EDGRPCRFPFRYGGRMLHACTSEGSAHRKWCATTHNYDRDRAWGYCVE). 19 disulfides stabilise this stretch: Cys-108–Cys-133, Cys-122–Cys-148, Cys-164–Cys-175, Cys-169–Cys-186, Cys-188–Cys-197, Cys-202–Cys-230, Cys-228–Cys-237, Cys-245–Cys-256, Cys-250–Cys-267, Cys-269–Cys-278, Cys-286–Cys-367, Cys-307–Cys-349, Cys-338–Cys-362, Cys-394–Cys-521, Cys-432–Cys-448, Cys-440–Cys-510, Cys-535–Cys-604, Cys-567–Cys-583, and Cys-594–Cys-622. An EGF-like 1 domain is found at 160-198 (ALDPCASGPCLNGGSCSNTQDPQSYHCSCPRAFTGKDCG). One can recognise a Fibronectin type-I domain in the interval 200 to 240 (EKCFDETRYEYLEGGDRWARVRQGHVEQCECFGGRTWCEGT). The EGF-like 2 domain maps to 241 to 279 (RHTACLSSPCLNGGTCHLIVATGTTVCACPPGFAGRLCN). The region spanning 286–367 (CFLGNGTGYR…SWEYCRLEAC (82 aa)) is the Kringle domain. N-linked (GlcNAc...) asparagine glycosylation occurs at Asn-290. The Peptidase S1 domain maps to 408–646 (IIGGSSSLPG…YVDWINDRIR (239 aa)). His-447 acts as the Charge relay system in catalysis. Asn-468 and Asn-492 each carry an N-linked (GlcNAc...) asparagine glycan. Asp-497 (charge relay system) is an active-site residue. A glycan (N-linked (GlcNAc...) asparagine) is linked at Asn-546. Ser-598 acts as the Charge relay system in catalysis.

The protein belongs to the peptidase S1 family. As to quaternary structure, heterodimer of a short chain and a long chain linked by a disulfide bond. Post-translationally, the active form of HGFAC presents in the serum is derived from the COOH-terminal region of the precursor by the cleavage of bonds between Arg-372 and Val-373 and Arg-407 and Ile-408. Liver.

The protein localises to the secreted. Its function is as follows. Serine protease that hydrolyzes the inactive zymogen hepatocyte growth factor (HGFsc) to an activated disulfide-linked heterodimer, then initiating hepatocyte growth factor receptor signaling pathway. This is Hepatocyte growth factor activator serine protease from Homo sapiens (Human).